Consider the following 150-residue polypeptide: Lymphotoxin-beta (150 aa).

The THD domain occupies Ala-1–Val-149. Residue Asn-128 is glycosylated (N-linked (GlcNAc...) asparagine).

It belongs to the tumor necrosis factor family. Heterotrimer of either two LTB and one LTA subunits or (less prevalent) two LTA and one LTB subunits.

The protein resides in the membrane. Its function is as follows. Cytokine that binds to LTBR/TNFRSF3. May play a specific role in immune response regulation. Provides the membrane anchor for the attachment of the heterotrimeric complex to the cell surface. This Sus scrofa (Pig) protein is Lymphotoxin-beta (LTB).